A 328-amino-acid polypeptide reads, in one-letter code: Malate dehydrogenase (328 aa).

11–17 (GAAGQIG) is an NAD(+) binding site. Arg94 and Arg100 together coordinate substrate. NAD(+) is bound by residues Asn107, Gln114, and 131–133 (VGN). 2 residues coordinate substrate: Asn133 and Arg164. Catalysis depends on His189, which acts as the Proton acceptor.

The protein belongs to the LDH/MDH superfamily. MDH type 2 family.

It catalyses the reaction (S)-malate + NAD(+) = oxaloacetate + NADH + H(+). Functionally, catalyzes the reversible oxidation of malate to oxaloacetate. This chain is Malate dehydrogenase, found in Xanthomonas euvesicatoria pv. vesicatoria (strain 85-10) (Xanthomonas campestris pv. vesicatoria).